The following is a 641-amino-acid chain: Sodium-dependent nutrient amino acid transporter 1 (641 aa).

Positions 1 to 34 (MELKGVQPSNGSANGNGTTNAASTEKADTEKQTA) are disordered. Residues 1–38 (MELKGVQPSNGSANGNGTTNAASTEKADTEKQTAERTN) are Cytoplasmic-facing. Residues 9-24 (SNGSANGNGTTNAAST) show a composition bias toward low complexity. Residues 25–34 (EKADTEKQTA) are compositionally biased toward basic and acidic residues. The next 3 helical transmembrane spans lie at 39–59 (WGNG…LGNV), 72–92 (GAFL…MYYL), and 109–129 (SVVP…ICII). Asn183 and Asn188 each carry an N-linked (GlcNAc...) asparagine glycan. A run of 9 helical transmembrane segments spans residues 229–249 (PDWK…LVIM), 258–278 (AAYF…IRAV), 307–327 (AVVQ…MFAS), 341–361 (IVTT…FAIL), 401–421 (LFSV…IVAL), 441–461 (VALI…TPGG), 474–494 (TYVV…VYGL), 516–536 (CWSF…MATI), and 552–572 (IAGW…GLWY).

Belongs to the sodium:neurotransmitter symporter (SNF) (TC 2.A.22) family.

Its subcellular location is the membrane. Unusual broad substrate spectrum amino acid:sodium cotransporter that promotes absorption of the D isomers of essential amino acids. Neutral amino acids are the preferred substrates, especially methionine and phenylalanine. The protein is Sodium-dependent nutrient amino acid transporter 1 of Drosophila yakuba (Fruit fly).